A 577-amino-acid polypeptide reads, in one-letter code: Lysine-specific demethylase 7B (577 aa).

Residues 5 to 56 (QLYCVCRQPYDVSRFMIECDICKDWFHGSCVEVEEHYAVDIDVYHCPNCDVH) form a PHD-type zinc finger. One can recognise a JmjC domain in the interval 198–354 (FSDTKMAELV…MQLRCYEMER (157 aa)). Thr-247 is a substrate binding site. Fe cation contacts are provided by His-250 and Asp-252. A substrate-binding site is contributed by Lys-267. His-322 contributes to the Fe cation binding site. Positions 460–513 (CPSTRSAHERGSHARKTARRLRGHHHHHHRHHHHHHHHHHHNHQHSDGPKAPSH) are disordered. The segment covering 472–502 (HARKTARRLRGHHHHHHRHHHHHHHHHHHNH) has biased composition (basic residues).

Belongs to the JHDM1 histone demethylase family. JHDM1D subfamily. Requires Fe(2+) as cofactor. As to expression, predominantly expressed in brain.

The protein localises to the nucleus. In terms of biological role, histone demethylase required for brain development. Specifically demethylates dimethylated 'Lys-9' and 'Lys-27' (H3K9me2 and H3K27me2, respectively) of histone H3 and monomethylated histone H4 'Lys-20' residue (H4K20Me1), thereby playing a central role in histone code. In Danio rerio (Zebrafish), this protein is Lysine-specific demethylase 7B (jhdm1db).